Consider the following 177-residue polypeptide: 2''-aminoglycoside nucleotidyltransferase (177 aa).

The N-terminal domain stretch occupies residues 1–92 (MDTTQVTLIH…ELLDCEPAWW (92 aa)). Mg(2+) is bound by residues aspartate 44, aspartate 46, and aspartate 86. Aspartate 86 acts as the Proton acceptor in catalysis. The C-terminal domain stretch occupies residues 93–177 (ADEAYEIAEA…RAAFRSRYAA (85 aa)). Alanine 100 provides a ligand contact to kanamycin A.

In terms of assembly, monomer. It depends on Mg(2+) as a cofactor.

The catalysed reaction is nucleoside triphosphate + gentamicin = diphosphate + 2''-nucleotidylgentamicin.. In terms of biological role, mediates bacterial resistance to kanamycin, gentamicin, dibekacin, sisomicin and tobramycin by adenylating the 2''-hydroxyl group of these antibiotics. The protein is 2''-aminoglycoside nucleotidyltransferase of Klebsiella pneumoniae.